Reading from the N-terminus, the 1476-residue chain is Copper-transporting ATPase 1 (1476 aa).

Residues 1-642 lie on the Cytoplasmic side of the membrane; that stretch reads MEPSMDVNSV…HKREIKQWRS (642 aa). HMA domains are found at residues 8-74 and 85-151; these read NSVT…FDAL and TDTL…LETG. Positions 18, 19, and 22 each coordinate Cu(+). Thr-152 bears the Phosphothreonine mark. HMA domains are found at residues 171–237 and 276–342; these read VVLK…FPAF and STAT…PGQY. Residues Cys-182, Cys-185, Cys-287, and Cys-290 each contribute to the Cu(+) site. Thr-326 bears the Phosphothreonine mark. Ser-338, Ser-352, Ser-356, and Ser-361 each carry phosphoserine. HMA domains follow at residues 376-442, 478-544, and 554-620; these read QETV…FDAV, SKCY…FGAT, and GILK…FEAS. Cu(+) contacts are provided by Cys-387, Cys-390, Cys-489, Cys-492, Cys-565, and Cys-568. A helical transmembrane segment spans residues 643-665; sequence SFLVSLFFCTPVMGLMMYMMAME. N-linked (GlcNAc...) asparagine glycosylation is found at Asn-674 and Asn-685. 3 helical membrane-spanning segments follow: residues 695-717, 736-760, and 770-788; these read ILPG…QFFG, MDVL…VAMY, and SFDT…RWLE. A glycan (N-linked (GlcNAc...) asparagine) is linked at Asn-887. The helical transmembrane segment at 930-952 threads the bilayer; it reads YFVPFIVLVSIATLLVWIIIGFQ. Asn-953 carries an N-linked (GlcNAc...) asparagine glycan. Residues 978–998 traverse the membrane as a helical segment; it reads AFQASITVLCIACPCSLGLAT. Residue Asp-1034 is the 4-aspartylphosphate intermediate of the active site. Residues Asn-1130 and Asn-1134 are each glycosylated (N-linked (GlcNAc...) asparagine). 2 helical membrane passes run 1347 to 1373 and 1379 to 1397; these read INFL…IGLV and GSAA…SLFL. Ser-1420 and Ser-1422 each carry phosphoserine. An N-linked (GlcNAc...) asparagine glycan is attached at Asn-1448. Ser-1450, Ser-1453, Ser-1456, Ser-1459, Ser-1463, Ser-1466, and Ser-1476 each carry phosphoserine.

This sequence belongs to the cation transport ATPase (P-type) (TC 3.A.3) family. Monomer. Interacts with PDZD11. Interacts with ATOX1 and COMMD1. Interacts with TYRP1. Directly interacts with SOD3; this interaction is copper-dependent and is required for SOD3 activity. Expressed in most tissues except liver.

The protein resides in the golgi apparatus. Its subcellular location is the trans-Golgi network membrane. It is found in the cell membrane. It carries out the reaction Cu(+)(in) + ATP + H2O = Cu(+)(out) + ADP + phosphate + H(+). Its function is as follows. May function in the export of copper from the cytoplasm to an intracellular organelle. It may serve as well for the export of other metals. The protein is Copper-transporting ATPase 1 (ATP7A) of Cricetulus griseus (Chinese hamster).